Reading from the N-terminus, the 333-residue chain is MPANYTCTRPDGDNTDFRYFIYAVTYTVILVPGLIGNILALWVFYGYMKETKRAVIFMINLAIADLLQVLSLPLRIFYYLNHDWPFGPGLCMFCFYLKYVNMYASIYFLVCISVRRFWFLMYPFRFHDCKQKYDLYISIAGWLIICLACVLFPLLRTSDDTSGNRTKCFVDLPTRNVNLAQSVVMMTIGELIGFVTPLLIVLYCTWKTVLSLQDKYPMAQDLGEKQKALKMILTCAGVFLICFAPYHFSFPLDFLVKSNEIKSCLARRVILIFHSVALCLASLNSCLDPVIYYFSTNEFRRRLSRQDLHDSIQLHAKSFVSNHTASTMTPELC.

The Extracellular segment spans residues 1–27 (MPANYTCTRPDGDNTDFRYFIYAVTYT). Asparagine 4 carries an N-linked (GlcNAc...) asparagine glycan. The chain crosses the membrane as a helical span at residues 28–48 (VILVPGLIGNILALWVFYGYM). Topologically, residues 49–53 (KETKR) are cytoplasmic. The chain crosses the membrane as a helical span at residues 54 to 74 (AVIFMINLAIADLLQVLSLPL). The Extracellular segment spans residues 75–91 (RIFYYLNHDWPFGPGLC). A disulfide bridge links cysteine 91 with cysteine 168. A helical transmembrane segment spans residues 92 to 112 (MFCFYLKYVNMYASIYFLVCI). The Cytoplasmic segment spans residues 113–134 (SVRRFWFLMYPFRFHDCKQKYD). A helical transmembrane segment spans residues 135–155 (LYISIAGWLIICLACVLFPLL). Over 156 to 182 (RTSDDTSGNRTKCFVDLPTRNVNLAQS) the chain is Extracellular. An N-linked (GlcNAc...) asparagine glycan is attached at asparagine 164. The helical transmembrane segment at 183 to 203 (VVMMTIGELIGFVTPLLIVLY) threads the bilayer. Residues 204–231 (CTWKTVLSLQDKYPMAQDLGEKQKALKM) lie on the Cytoplasmic side of the membrane. A helical transmembrane segment spans residues 232–252 (ILTCAGVFLICFAPYHFSFPL). Residues 253–269 (DFLVKSNEIKSCLARRV) are Extracellular-facing. The chain crosses the membrane as a helical span at residues 270 to 290 (ILIFHSVALCLASLNSCLDPV). Topologically, residues 291–333 (IYYFSTNEFRRRLSRQDLHDSIQLHAKSFVSNHTASTMTPELC) are cytoplasmic.

It belongs to the G-protein coupled receptor 1 family. As to quaternary structure, interacts with GNA13. Interacts with CCL21.

It localises to the cell membrane. Its function is as follows. G-protein-coupled receptor of lysophosphatidylserine (LysoPS) that plays different roles in immune response. Plays a negative role in regulatory T-cell accumulation and homeostasis. Under inflammatory conditions where LysoPS production increases, contributes to the down-regulation of regulatory T-cell activity to favor effector response. Mediates the suppression of IL-2 production in activated T-lymphocytes leading to inhibition of growth, proliferation and differentiation of T-cells. Mechanistically, acts via G(s)-containing heterotrimeric G proteins to trigger elevated cyclic AMP levels and protein kinase A/PKA activity, which may in turn act to antagonize proximal TCR signaling. Plays an important role in the initial period of sepsis through the regulation of macrophage polarization and pro- and anti-inflammatory cytokine secretions. Upon testosterone treatment, acts as a receptor for CCL21 and subsequently triggers through G(q)-alpha and G(12)/G(13) proteins a calcium flux leading to chemotactic effects on activated B-cells. Signals via GNA13 and PKA to promote CD86 up-regulation by follicular B-cells. In Homo sapiens (Human), this protein is Probable G-protein coupled receptor 174 (GPR174).